The chain runs to 198 residues: IMP cyclohydrolase (198 aa).

It belongs to the archaeal IMP cyclohydrolase family.

It catalyses the reaction IMP + H2O = 5-formamido-1-(5-phospho-D-ribosyl)imidazole-4-carboxamide. It participates in purine metabolism; IMP biosynthesis via de novo pathway; IMP from 5-formamido-1-(5-phospho-D-ribosyl)imidazole-4-carboxamide: step 1/1. In terms of biological role, catalyzes the cyclization of 5-formylamidoimidazole-4-carboxamide ribonucleotide to IMP. The protein is IMP cyclohydrolase of Methanopyrus kandleri (strain AV19 / DSM 6324 / JCM 9639 / NBRC 100938).